The following is a 101-amino-acid chain: Cilia- and flagella-associated protein 141 (101 aa).

As to quaternary structure, microtubule inner protein component of sperm flagellar doublet microtubules.

It is found in the cytoplasm. It localises to the cytoskeleton. The protein localises to the cilium axoneme. The protein resides in the flagellum axoneme. Its function is as follows. Microtubule inner protein (MIP) part of the dynein-decorated doublet microtubules (DMTs) in cilia axoneme, which is required for motile cilia beating. This chain is Cilia- and flagella-associated protein 141, found in Mus musculus (Mouse).